We begin with the raw amino-acid sequence, 371 residues long: Cytochrome b (371 aa).

4 helical membrane passes run 25–45, 69–90, 105–125, and 170–190; these read FGSM…FLAV, WMMQ…YIHI, WMSG…GYVL, and FFAL…LHII. Heme b-binding residues include H75 and H89. 2 residues coordinate heme b: H174 and H188. Residue H193 participates in a ubiquinone binding. A run of 4 helical transmembrane segments spans residues 218–238, 280–300, 312–332, and 339–358; these read YKDL…VSFF, LGGA…PFTH, LSQL…WAAT, and YIII…ISMP.

It belongs to the cytochrome b family. In terms of assembly, the cytochrome bc1 complex contains 3 respiratory subunits (MT-CYB, CYC1 and UQCRFS1), 2 core proteins (UQCRC1 and UQCRC2) and probably 6 low-molecular weight proteins. Requires heme b as cofactor.

The protein resides in the mitochondrion inner membrane. Component of the ubiquinol-cytochrome c reductase complex (complex III or cytochrome b-c1 complex) that is part of the mitochondrial respiratory chain. The b-c1 complex mediates electron transfer from ubiquinol to cytochrome c. Contributes to the generation of a proton gradient across the mitochondrial membrane that is then used for ATP synthesis. The sequence is that of Cytochrome b (MT-CYB) from Python molurus (Indian python).